A 470-amino-acid chain; its full sequence is Nuclear receptor ROR-beta (470 aa).

Positions V18–F93 form a DNA-binding region, nuclear receptor. 2 NR C4-type zinc fingers span residues C21–C41 and C57–C81. A compositionally biased stretch (basic and acidic residues) spans L104–E117. Positions L104–E127 are disordered. The NR LBD domain occupies E222–L460. The AF-2 motif lies at L456–F461.

The protein belongs to the nuclear hormone receptor family. NR1 subfamily. As to quaternary structure, monomer. Interacts with CRX.

The protein localises to the nucleus. Its subcellular location is the nucleoplasm. Its function is as follows. Nuclear receptor that binds DNA as a monomer to ROR response elements (RORE) containing a single core motif half-site 5'-AGGTCA-3' preceded by a short A-T-rich sequence. Considered to have intrinsic transcriptional activity, have some natural ligands such as all-trans retinoic acid (ATRA) and other retinoids which act as inverse agonists repressing the transcriptional activity. Required for normal postnatal development of rod and cone photoreceptor cells. Modulates rod photoreceptors differentiation at least by inducing the transcription factor NRL-mediated pathway. In cone photoreceptor cells, regulates transcription of OPN1SW. Involved in the regulation of the period length and stability of the circadian rhythm. May control cytoarchitectural patterning of neocortical neurons during development. May act in a dose-dependent manner to regulate barrel formation upon innervation of layer IV neurons by thalamocortical axons. May play a role in the suppression of osteoblastic differentiation through the inhibition of RUNX2 transcriptional activity. In terms of biological role, isoform 1 is critical for hindlimb motor control and for the differentiation of amacrine and horizontal cells in the retina. Regulates the expression of PTF1A synergistically with FOXN4. The chain is Nuclear receptor ROR-beta (RORB) from Homo sapiens (Human).